A 259-amino-acid polypeptide reads, in one-letter code: Indole-3-glycerol phosphate synthase (259 aa).

Belongs to the TrpC family.

It catalyses the reaction 1-(2-carboxyphenylamino)-1-deoxy-D-ribulose 5-phosphate + H(+) = (1S,2R)-1-C-(indol-3-yl)glycerol 3-phosphate + CO2 + H2O. It functions in the pathway amino-acid biosynthesis; L-tryptophan biosynthesis; L-tryptophan from chorismate: step 4/5. The chain is Indole-3-glycerol phosphate synthase from Rhodopirellula baltica (strain DSM 10527 / NCIMB 13988 / SH1).